Consider the following 359-residue polypeptide: 4-hydroxy-3-methylbut-2-en-1-yl diphosphate synthase (flavodoxin) (359 aa).

[4Fe-4S] cluster contacts are provided by C264, C267, C299, and E306.

The protein belongs to the IspG family. The cofactor is [4Fe-4S] cluster.

It carries out the reaction (2E)-4-hydroxy-3-methylbut-2-enyl diphosphate + oxidized [flavodoxin] + H2O + 2 H(+) = 2-C-methyl-D-erythritol 2,4-cyclic diphosphate + reduced [flavodoxin]. It participates in isoprenoid biosynthesis; isopentenyl diphosphate biosynthesis via DXP pathway; isopentenyl diphosphate from 1-deoxy-D-xylulose 5-phosphate: step 5/6. In terms of biological role, converts 2C-methyl-D-erythritol 2,4-cyclodiphosphate (ME-2,4cPP) into 1-hydroxy-2-methyl-2-(E)-butenyl 4-diphosphate. The protein is 4-hydroxy-3-methylbut-2-en-1-yl diphosphate synthase (flavodoxin) of Helicobacter pylori (strain ATCC 700392 / 26695) (Campylobacter pylori).